We begin with the raw amino-acid sequence, 242 residues long: Terpene cyclase dpfgB (242 aa).

7 helical membrane-spanning segments follow: residues 15–37 (DVAW…NYVG), 51–71 (ALMA…IYPF), 75–95 (LEMY…YTAV), 112–132 (LPLI…ALAA), 141–161 (AWSA…QLLC), 169–189 (SYFL…QDIL), and 205–225 (LYIW…ICLW).

The protein belongs to the paxB family.

It is found in the membrane. It participates in secondary metabolite biosynthesis; terpenoid biosynthesis. Terpene cyclase; part of the gene cluster that mediates the biosynthesis of diterpenoid pyrones. The first step of the pathway is the synthesis of the alpha-pyrone moiety by the polyketide synthase dpfgA via condensation of one acetyl-CoA starter unit with 3 malonyl-CoA units and 2 methylations. The alpha-pyrone is then combined with geranylgeranyl pyrophosphate (GGPP) formed by the GGPP synthase dpfgD through the action of the prenyltransferase dpfgC to yield a linear alpha-pyrone diterpenoid. Subsequent steps in the diterpenoid pyrone biosynthetic pathway involve the decalin core formation, which is initiated by the epoxidation of the C10-C11 olefin by the FAD-dependent oxidoreductase dpfgE, and is followed by a cyclization cascade catalyzed by the terpene cyclase dpfgB. The short chain dehydrogenase/reductase dpfgG then oxidizes the 8S hydroxy group to a ketone and the short chain dehydrogenase/reductase dpfgH reduces the ketone to the 8R hydroxy group to yield higginsianin B. Higginsianin B is further methylated by the methyltransferase dpfgI to produce the intermediate named FDDP B. The cytochrome P450 monooxygenase dfgpJ then catalyzes a three-step oxidation at C-27 to generate a carboxylic acid as well as C-26 hydroxylation. Finally, methyltransferase dpfgK methylates the carboxylic acid generated by dpfgJ, yielding the final diterpenoid pyrones from the pathway which were named FDDP D and FDDP E. The sequence is that of Terpene cyclase dpfgB from Gibberella zeae (strain ATCC MYA-4620 / CBS 123657 / FGSC 9075 / NRRL 31084 / PH-1) (Wheat head blight fungus).